The following is a 175-amino-acid chain: Development-specific protein S homolog (175 aa).

Beta/gamma crystallin 'Greek key' domains follow at residues 2–46 (ANIT…KVPP) and 48–86 (VKAI…KVMS). Residues 87-90 (VPVQ) are connecting peptide. 2 consecutive Beta/gamma crystallin 'Greek key' domains span residues 91-135 (PRAR…KPEG) and 136-175 (LKVV…RITP).

It belongs to the beta/gamma-crystallin family.

It localises to the spore. The protein localises to the perispore. This Myxococcus xanthus protein is Development-specific protein S homolog (ops).